Consider the following 734-residue polypeptide: Photosystem I P700 chlorophyll a apoprotein A2 (734 aa).

A run of 8 helical transmembrane segments spans residues 46-69 (IFAS…FHVA), 135-158 (LYIG…LHLQ), 175-199 (LNHH…HVAI), 273-291 (IAHH…GHMY), 330-353 (LHFQ…QHMY), 369-395 (AALY…IFFI), 417-439 (AIIS…LYVH), and 517-535 (FLVH…LILV). 2 residues coordinate [4Fe-4S] cluster: cysteine 559 and cysteine 568. Transmembrane regions (helical) follow at residues 575–596 (AFYL…YWHW) and 643–665 (LSVW…MFLI). Chlorophyll a is bound by residues histidine 654, methionine 662, and tyrosine 670. Tryptophan 671 is a phylloquinone binding site. A helical transmembrane segment spans residues 707–727 (VVGLAHFSVGYVFTYAAFLIA).

The protein belongs to the PsaA/PsaB family. As to quaternary structure, the PsaA/B heterodimer binds the P700 chlorophyll special pair and subsequent electron acceptors. PSI consists of a core antenna complex that captures photons, and an electron transfer chain that converts photonic excitation into a charge separation. The eukaryotic PSI reaction center is composed of at least 11 subunits. P700 is a chlorophyll a/chlorophyll a' dimer, A0 is one or more chlorophyll a, A1 is one or both phylloquinones and FX is a shared 4Fe-4S iron-sulfur center. is required as a cofactor.

It is found in the plastid. Its subcellular location is the chloroplast thylakoid membrane. The enzyme catalyses reduced [plastocyanin] + hnu + oxidized [2Fe-2S]-[ferredoxin] = oxidized [plastocyanin] + reduced [2Fe-2S]-[ferredoxin]. Functionally, psaA and PsaB bind P700, the primary electron donor of photosystem I (PSI), as well as the electron acceptors A0, A1 and FX. PSI is a plastocyanin-ferredoxin oxidoreductase, converting photonic excitation into a charge separation, which transfers an electron from the donor P700 chlorophyll pair to the spectroscopically characterized acceptors A0, A1, FX, FA and FB in turn. Oxidized P700 is reduced on the lumenal side of the thylakoid membrane by plastocyanin. This chain is Photosystem I P700 chlorophyll a apoprotein A2, found in Mesostigma viride (Green alga).